A 729-amino-acid chain; its full sequence is Glycerophosphodiester phosphodiesterase GDPDL5 (729 aa).

The N-terminal stretch at 1 to 22 is a signal peptide; sequence MACPRVIFLILITFFILQTAFS. GP-PDE domains follow at residues 33–320 and 337–645; these read PAVI…YRAI and ITII…ARYR. Residues asparagine 88, asparagine 162, asparagine 218, asparagine 227, asparagine 285, asparagine 302, asparagine 390, asparagine 401, and asparagine 507 are each glycosylated (N-linked (GlcNAc...) asparagine). The chain crosses the membrane as a helical span at residues 709–729; that stretch reads AIEVPFAFIAMAILVCFFISV.

This sequence belongs to the glycerophosphoryl diester phosphodiesterase family. As to expression, expressed in stems, flowers and siliques.

It localises to the membrane. The enzyme catalyses a sn-glycero-3-phosphodiester + H2O = an alcohol + sn-glycerol 3-phosphate + H(+). The polypeptide is Glycerophosphodiester phosphodiesterase GDPDL5 (Arabidopsis thaliana (Mouse-ear cress)).